Here is a 34-residue protein sequence, read N- to C-terminus: Brevinin-2GHa (34 aa).

C27 and C33 are disulfide-bonded.

In terms of tissue distribution, expressed by the skin glands.

The protein localises to the secreted. Functionally, antimicrobial peptide. Active against the Gram-positive bacteria S.aureus FDA209P (MIC=14.9 ug/ml) and B.subtilis ATCC 6633 (MIC&gt;64 ug/ml), but not active against the Gram-negative bacterium E.coli or the fungus C.albicans. The sequence is that of Brevinin-2GHa from Sylvirana guentheri (Gunther's frog).